The chain runs to 157 residues: Large ribosomal subunit protein uL3 (157 aa).

The segment at 57–98 is disordered; the sequence is GKGFAGSIKRHNQSRGPESHGSRYHRRPGSMGPIKGKLKGKK.

This sequence belongs to the universal ribosomal protein uL3 family. As to quaternary structure, part of the 50S ribosomal subunit. Forms a cluster with proteins L14 and L19.

Its function is as follows. One of the primary rRNA binding proteins, it binds directly near the 3'-end of the 23S rRNA, where it nucleates assembly of the 50S subunit. The chain is Large ribosomal subunit protein uL3 (rplC) from Onion yellows phytoplasma (strain OY-M).